An 831-amino-acid chain; its full sequence is Prickle-like protein 1 (831 aa).

The region spanning 14–122 (FGCQRSSTSD…TIKLLSRAMM (109 aa)) is the PET domain. LIM zinc-binding domains follow at residues 124-189 (AVCE…LLKP), 189-249 (PRCS…LYAE), and 249-313 (EYCE…EDIH). Residues 314–346 (ASDSSDSAFQSARSRDSRRSVRMGRSSRSADQC) are disordered. Phosphoserine is present on residues S315, S591, and S594. 2 disordered regions span residues 664 to 688 (EERG…NALN) and 763 to 831 (CSSS…CIIS). Positions 669–680 (RPHHHRHRRSRK) are enriched in basic residues. Phosphoserine is present on S683. The span at 797–812 (DLSSPASALPTPQFNQ) shows a compositional bias: polar residues. Residues 815–831 (TKSKKKKGHRGKNCIIS) show a composition bias toward basic residues. A Cysteine methyl ester modification is found at C828. The S-farnesyl cysteine moiety is linked to residue C828. Residues 829 to 831 (IIS) constitute a propeptide, removed in mature form.

This sequence belongs to the prickle / espinas / testin family. As to quaternary structure, interacts with REST.

Its subcellular location is the nucleus membrane. The protein localises to the cytoplasm. It localises to the cytosol. Involved in the planar cell polarity pathway that controls convergent extension during gastrulation and neural tube closure. Convergent extension is a complex morphogenetic process during which cells elongate, move mediolaterally, and intercalate between neighboring cells, leading to convergence toward the mediolateral axis and extension along the anteroposterior axis. Necessary for nuclear localization of REST. May serve as nuclear receptor. The polypeptide is Prickle-like protein 1 (Prickle1) (Rattus norvegicus (Rat)).